Reading from the N-terminus, the 358-residue chain is Nicotinate-nucleotide--dimethylbenzimidazole phosphoribosyltransferase (358 aa).

Glu-313 (proton acceptor) is an active-site residue.

This sequence belongs to the CobT family.

It catalyses the reaction 5,6-dimethylbenzimidazole + nicotinate beta-D-ribonucleotide = alpha-ribazole 5'-phosphate + nicotinate + H(+). Its pathway is nucleoside biosynthesis; alpha-ribazole biosynthesis; alpha-ribazole from 5,6-dimethylbenzimidazole: step 1/2. In terms of biological role, catalyzes the synthesis of alpha-ribazole-5'-phosphate from nicotinate mononucleotide (NAMN) and 5,6-dimethylbenzimidazole (DMB). This Corynebacterium glutamicum (strain ATCC 13032 / DSM 20300 / JCM 1318 / BCRC 11384 / CCUG 27702 / LMG 3730 / NBRC 12168 / NCIMB 10025 / NRRL B-2784 / 534) protein is Nicotinate-nucleotide--dimethylbenzimidazole phosphoribosyltransferase.